The sequence spans 141 residues: Large ribosomal subunit protein uL16 (141 aa).

It belongs to the universal ribosomal protein uL16 family. As to quaternary structure, part of the 50S ribosomal subunit.

Functionally, binds 23S rRNA and is also seen to make contacts with the A and possibly P site tRNAs. This chain is Large ribosomal subunit protein uL16, found in Campylobacter fetus subsp. fetus (strain 82-40).